A 396-amino-acid chain; its full sequence is Elongation factor Tu (396 aa).

Residues 11–205 form the tr-type G domain; the sequence is KPHVNIGTIG…TIDEYIPTPV (195 aa). Residues 20 to 27 are G1; it reads GHVDHGKT. GTP is bound at residue 20–27; the sequence is GHVDHGKT. Residue Thr-27 participates in Mg(2+) binding. A G2 region spans residues 61–65; the sequence is GITIN. A G3 region spans residues 82 to 85; the sequence is DAPG. Residues 82–86 and 137–140 contribute to the GTP site; these read DAPGH and NKTD. Residues 137–140 are G4; sequence NKTD. Residues 175–177 form a G5 region; sequence SAL.

This sequence belongs to the TRAFAC class translation factor GTPase superfamily. Classic translation factor GTPase family. EF-Tu/EF-1A subfamily. In terms of assembly, monomer.

Its subcellular location is the cytoplasm. The catalysed reaction is GTP + H2O = GDP + phosphate + H(+). GTP hydrolase that promotes the GTP-dependent binding of aminoacyl-tRNA to the A-site of ribosomes during protein biosynthesis. The chain is Elongation factor Tu from Lacticaseibacillus casei (strain BL23) (Lactobacillus casei).